A 487-amino-acid polypeptide reads, in one-letter code: Iron-sulfur cluster assembly SufBD family protein ycf24 (487 aa).

The protein belongs to the iron-sulfur cluster assembly SufBD family.

It localises to the plastid. The protein resides in the chloroplast. The sequence is that of Iron-sulfur cluster assembly SufBD family protein ycf24 (ycf24) from Pyropia yezoensis (Susabi-nori).